Reading from the N-terminus, the 104-residue chain is Large ribosomal subunit protein uL24 (104 aa).

This sequence belongs to the universal ribosomal protein uL24 family. As to quaternary structure, part of the 50S ribosomal subunit.

One of two assembly initiator proteins, it binds directly to the 5'-end of the 23S rRNA, where it nucleates assembly of the 50S subunit. Its function is as follows. One of the proteins that surrounds the polypeptide exit tunnel on the outside of the subunit. The sequence is that of Large ribosomal subunit protein uL24 from Rhodopseudomonas palustris (strain BisB5).